The chain runs to 382 residues: D-galactonate dehydratase (382 aa).

Mg(2+) is bound at residue Asp-183. Residue His-185 is the Proton donor of the active site. Residues Glu-209 and Glu-235 each coordinate Mg(2+). His-285 serves as the catalytic Proton acceptor.

This sequence belongs to the mandelate racemase/muconate lactonizing enzyme family. GalD subfamily. It depends on Mg(2+) as a cofactor.

It catalyses the reaction D-galactonate = 2-dehydro-3-deoxy-D-galactonate + H2O. Its pathway is carbohydrate acid metabolism; D-galactonate degradation; D-glyceraldehyde 3-phosphate and pyruvate from D-galactonate: step 1/3. Its function is as follows. Catalyzes the dehydration of D-galactonate to 2-keto-3-deoxy-D-galactonate. The protein is D-galactonate dehydratase of Klebsiella pneumoniae subsp. pneumoniae (strain ATCC 700721 / MGH 78578).